The chain runs to 316 residues: Beta-ketoacyl-[acyl-carrier-protein] synthase III 4 (316 aa).

Active-site residues include C114 and H242. The interval 243 to 247 (QANLR) is ACP-binding. N272 is an active-site residue.

Belongs to the thiolase-like superfamily. FabH family. In terms of assembly, homodimer.

The protein resides in the cytoplasm. It catalyses the reaction malonyl-[ACP] + acetyl-CoA + H(+) = 3-oxobutanoyl-[ACP] + CO2 + CoA. It functions in the pathway lipid metabolism; fatty acid biosynthesis. Functionally, catalyzes the condensation reaction of fatty acid synthesis by the addition to an acyl acceptor of two carbons from malonyl-ACP. Catalyzes the first condensation reaction which initiates fatty acid synthesis and may therefore play a role in governing the total rate of fatty acid production. Possesses both acetoacetyl-ACP synthase and acetyl transacylase activities. Its substrate specificity determines the biosynthesis of branched-chain and/or straight-chain of fatty acids. In Streptomyces coelicolor (strain ATCC BAA-471 / A3(2) / M145), this protein is Beta-ketoacyl-[acyl-carrier-protein] synthase III 4.